We begin with the raw amino-acid sequence, 351 residues long: Porphobilinogen deaminase (351 aa).

Cysteine 242 is modified (S-(dipyrrolylmethanemethyl)cysteine).

This sequence belongs to the HMBS family. As to quaternary structure, monomer. Requires dipyrromethane as cofactor.

The catalysed reaction is 4 porphobilinogen + H2O = hydroxymethylbilane + 4 NH4(+). The protein operates within porphyrin-containing compound metabolism; protoporphyrin-IX biosynthesis; coproporphyrinogen-III from 5-aminolevulinate: step 2/4. Functionally, tetrapolymerization of the monopyrrole PBG into the hydroxymethylbilane pre-uroporphyrinogen in several discrete steps. This chain is Porphobilinogen deaminase, found in Rickettsia africae (strain ESF-5).